A 501-amino-acid polypeptide reads, in one-letter code: Protein disulfide isomerase-like 1-1 (501 aa).

Residues 1–23 (MAMRGFTLFSILVLSLCASSIRS) form the signal peptide. Positions 24 to 141 (EETETKEFVL…IVTYLKKQSG (118 aa)) constitute a Thioredoxin 1 domain. An N-linked (GlcNAc...) asparagine glycan is attached at asparagine 39. Active-site nucleophile residues include cysteine 59 and cysteine 62. A disulfide bridge links cysteine 59 with cysteine 62. Asparagine 275 carries an N-linked (GlcNAc...) asparagine glycan. The Thioredoxin 2 domain maps to 354–482 (FKDGKIAPHK…FISFVDKNKD (129 aa)). Active-site nucleophile residues include cysteine 404 and cysteine 407. An intrachain disulfide couples cysteine 404 to cysteine 407. The Prevents secretion from ER motif lies at 498 to 501 (KDEL).

It belongs to the protein disulfide isomerase family. As to quaternary structure, interacts with RD21A, At3g19390, At5g43060. As to expression, highly expressed in flowers, stems and immature seeds, and at lower levels in leaves and siliques (at protein level).

The protein localises to the endoplasmic reticulum lumen. It is found in the vacuole. It carries out the reaction Catalyzes the rearrangement of -S-S- bonds in proteins.. Functionally, protein disulfide isomerase that associates with RD21A protease for trafficking from the ER through the Golgi to lytic and protein storage vacuoles of endothelial cells in developing seeds. Regulates the timing of programmed cell death (PCD) of the endothelial cells by chaperoning and inhibiting cysteine proteases during their trafficking to vacuoles. The chain is Protein disulfide isomerase-like 1-1 (PDIL1-1) from Arabidopsis thaliana (Mouse-ear cress).